The sequence spans 899 residues: Translation initiation factor IF-2 (899 aa).

3 disordered regions span residues 115–137 (EAKARAEQQAREAAEQKARLQTE), 170–189 (RGGGTVKPAPKPAETLEQKK), and 262–309 (DREI…HGFE). The tr-type G domain occupies 399 to 568 (TRPPVVTIMG…LIQSELMELK (170 aa)). Residues 408–415 (GHVDHGKT) are G1. 408–415 (GHVDHGKT) is a binding site for GTP. The G2 stretch occupies residues 433–437 (GITQH). The interval 454-457 (DTPG) is G3. GTP contacts are provided by residues 454-458 (DTPGH) and 508-511 (NKMD). A G4 region spans residues 508-511 (NKMD). The segment at 544 to 546 (SAH) is G5.

It belongs to the TRAFAC class translation factor GTPase superfamily. Classic translation factor GTPase family. IF-2 subfamily.

The protein localises to the cytoplasm. In terms of biological role, one of the essential components for the initiation of protein synthesis. Protects formylmethionyl-tRNA from spontaneous hydrolysis and promotes its binding to the 30S ribosomal subunits. Also involved in the hydrolysis of GTP during the formation of the 70S ribosomal complex. The chain is Translation initiation factor IF-2 from Acinetobacter baumannii (strain SDF).